The chain runs to 487 residues: Glutamate mutase epsilon subunit (487 aa).

Arg-62 lines the L-glutamate pocket. Adenosylcob(III)alamin is bound at residue Gly-64. Arg-96 lines the L-glutamate pocket. Residue Asn-119 coordinates adenosylcob(III)alamin. L-glutamate contacts are provided by residues 145–146, Glu-167, and Tyr-173; that span reads RH. Pro-176 is a binding site for adenosylcob(III)alamin. L-glutamate is bound at residue Tyr-177. The adenosylcob(III)alamin site is built by Phe-289, Lys-318, and Glu-322. The segment at 465 to 487 is disordered; it reads SDGKLIGRPGGDNSPAGGASDAD.

It belongs to the methylaspartate mutase GlmE subunit family. As to quaternary structure, heterotetramer composed of 2 epsilon subunits (GlmE) and 2 sigma subunits (GlmS). GlmE exists as a homodimer and GlmS as a monomer. The cofactor is adenosylcob(III)alamin.

It carries out the reaction (2S,3S)-3-methyl-L-aspartate = L-glutamate. The protein operates within amino-acid degradation; L-glutamate degradation via mesaconate pathway; acetate and pyruvate from L-glutamate: step 1/4. In terms of biological role, catalyzes the carbon skeleton rearrangement of L-glutamate to L-threo-3-methylaspartate ((2S,3S)-3-methylaspartate). The chain is Glutamate mutase epsilon subunit from Haloarcula marismortui (strain ATCC 43049 / DSM 3752 / JCM 8966 / VKM B-1809) (Halobacterium marismortui).